The chain runs to 168 residues: RNA pyrophosphohydrolase (168 aa).

Positions 8–159 (PYRTCVGVML…KRPVYERVVK (152 aa)) constitute a Nudix hydrolase domain. The short motif at 47 to 68 (GGVDPGEDTWKAAKRELYEETS) is the Nudix box element.

This sequence belongs to the Nudix hydrolase family. RppH subfamily. A divalent metal cation is required as a cofactor.

Its function is as follows. Accelerates the degradation of transcripts by removing pyrophosphate from the 5'-end of triphosphorylated RNA, leading to a more labile monophosphorylated state that can stimulate subsequent ribonuclease cleavage. In Rhodopseudomonas palustris (strain ATCC BAA-98 / CGA009), this protein is RNA pyrophosphohydrolase.